The following is a 294-amino-acid chain: Proteasome subunit beta (294 aa).

The propeptide at 1–65 is removed in mature form; by autocatalysis; that stretch reads MTADRPALRT…MESGDLAPHG (65 aa). Thr66 serves as the catalytic Nucleophile.

It belongs to the peptidase T1B family. As to quaternary structure, the 20S proteasome core is composed of 14 alpha and 14 beta subunits that assemble into four stacked heptameric rings, resulting in a barrel-shaped structure. The two inner rings, each composed of seven catalytic beta subunits, are sandwiched by two outer rings, each composed of seven alpha subunits. The catalytic chamber with the active sites is on the inside of the barrel. Has a gated structure, the ends of the cylinder being occluded by the N-termini of the alpha-subunits. Is capped by the proteasome-associated ATPase, ARC.

It localises to the cytoplasm. It carries out the reaction Cleavage of peptide bonds with very broad specificity.. It participates in protein degradation; proteasomal Pup-dependent pathway. The formation of the proteasomal ATPase ARC-20S proteasome complex, likely via the docking of the C-termini of ARC into the intersubunit pockets in the alpha-rings, may trigger opening of the gate for substrate entry. Interconversion between the open-gate and close-gate conformations leads to a dynamic regulation of the 20S proteasome proteolysis activity. In terms of biological role, component of the proteasome core, a large protease complex with broad specificity involved in protein degradation. This is Proteasome subunit beta from Rhodococcus opacus (strain B4).